A 255-amino-acid chain; its full sequence is Thiazole synthase (255 aa).

K96 (schiff-base intermediate with DXP) is an active-site residue. 1-deoxy-D-xylulose 5-phosphate is bound by residues G157, 183–184 (AG), and 205–206 (NT).

The protein belongs to the ThiG family. Homotetramer. Forms heterodimers with either ThiH or ThiS.

Its subcellular location is the cytoplasm. The catalysed reaction is [ThiS sulfur-carrier protein]-C-terminal-Gly-aminoethanethioate + 2-iminoacetate + 1-deoxy-D-xylulose 5-phosphate = [ThiS sulfur-carrier protein]-C-terminal Gly-Gly + 2-[(2R,5Z)-2-carboxy-4-methylthiazol-5(2H)-ylidene]ethyl phosphate + 2 H2O + H(+). It participates in cofactor biosynthesis; thiamine diphosphate biosynthesis. Functionally, catalyzes the rearrangement of 1-deoxy-D-xylulose 5-phosphate (DXP) to produce the thiazole phosphate moiety of thiamine. Sulfur is provided by the thiocarboxylate moiety of the carrier protein ThiS. In vitro, sulfur can be provided by H(2)S. The protein is Thiazole synthase of Geobacillus thermodenitrificans (strain NG80-2).